The primary structure comprises 74 residues: Peptide BmKb1 (74 aa).

An N-terminal signal peptide occupies residues 1–22; the sequence is MEIKYLLTVFLVLLIVSDHCQA. The residue at position 40 (K40) is a Lysine amide. A propeptide spanning residues 46–74 is cleaved from the precursor; the sequence is DLNGYIDHFKNFRKRDAELEELLSKLPIY.

Belongs to the non-disulfide-bridged peptide (NDBP) superfamily. Short antimicrobial peptide (group 4) family. Expressed by the venom gland.

It localises to the secreted. Its subcellular location is the target cell membrane. Functionally, has antibacterial activity against Gram-positive bacteria S.aureus, M.luteus, B.subtilis, and Gram-negative bacteria E.coli, and P.aeruginosa. The protein is Peptide BmKb1 of Olivierus martensii (Manchurian scorpion).